The chain runs to 333 residues: Anthranilate phosphoribosyltransferase (333 aa).

Residues glycine 81, 84–85 (GN), threonine 89, 91–94 (NIST), 109–117 (KHGNRSVSS), and alanine 121 contribute to the 5-phospho-alpha-D-ribose 1-diphosphate site. Glycine 81 is an anthranilate binding site. Residue serine 93 participates in Mg(2+) binding. An anthranilate-binding site is contributed by asparagine 112. An anthranilate-binding site is contributed by arginine 167. The Mg(2+) site is built by aspartate 225 and glutamate 226.

It belongs to the anthranilate phosphoribosyltransferase family. As to quaternary structure, homodimer. The cofactor is Mg(2+).

The enzyme catalyses N-(5-phospho-beta-D-ribosyl)anthranilate + diphosphate = 5-phospho-alpha-D-ribose 1-diphosphate + anthranilate. The protein operates within amino-acid biosynthesis; L-tryptophan biosynthesis; L-tryptophan from chorismate: step 2/5. Functionally, catalyzes the transfer of the phosphoribosyl group of 5-phosphorylribose-1-pyrophosphate (PRPP) to anthranilate to yield N-(5'-phosphoribosyl)-anthranilate (PRA). This Haemophilus influenzae (strain ATCC 51907 / DSM 11121 / KW20 / Rd) protein is Anthranilate phosphoribosyltransferase.